A 44-amino-acid chain; its full sequence is Photosystem I reaction center subunit IX (44 aa).

A helical membrane pass occupies residues 9–29 (YMRSAPVVAAAWITMTAGIII).

Belongs to the PsaJ family.

It localises to the cellular thylakoid membrane. In terms of biological role, may help in the organization of the PsaE and PsaF subunits. The sequence is that of Photosystem I reaction center subunit IX from Prochlorococcus marinus (strain MIT 9312).